A 252-amino-acid chain; its full sequence is Imidazole glycerol phosphate synthase subunit HisF (252 aa).

Catalysis depends on residues Asp-11 and Asp-130.

This sequence belongs to the HisA/HisF family. In terms of assembly, heterodimer of HisH and HisF.

The protein localises to the cytoplasm. The catalysed reaction is 5-[(5-phospho-1-deoxy-D-ribulos-1-ylimino)methylamino]-1-(5-phospho-beta-D-ribosyl)imidazole-4-carboxamide + L-glutamine = D-erythro-1-(imidazol-4-yl)glycerol 3-phosphate + 5-amino-1-(5-phospho-beta-D-ribosyl)imidazole-4-carboxamide + L-glutamate + H(+). The protein operates within amino-acid biosynthesis; L-histidine biosynthesis; L-histidine from 5-phospho-alpha-D-ribose 1-diphosphate: step 5/9. Its function is as follows. IGPS catalyzes the conversion of PRFAR and glutamine to IGP, AICAR and glutamate. The HisF subunit catalyzes the cyclization activity that produces IGP and AICAR from PRFAR using the ammonia provided by the HisH subunit. This is Imidazole glycerol phosphate synthase subunit HisF from Staphylococcus aureus (strain MRSA252).